Here is a 3630-residue protein sequence, read N- to C-terminus: Trimeric autotransporter adhesin AtaA (3630 aa).

Positions 1–23 (MNKIYKVIWNATLLAWVAVSELA) are cleaved as a signal peptide. A surface exposed passenger domain region spans residues 24–3487 (KGKTKSTTSK…TNQAVVNYLG (3464 aa)). Positions 108-315 (SIAIGENAQG…ASDAVTVAQL (208 aa)) are N-terminal YadA-like head. An N-terminal stalk region spans residues 316–2904 (DKAYDDTNGR…GRAATEEQLK (2589 aa)). A C-terminal YadA-like head region spans residues 2905–3169 (AVITSNITEV…DSDAVNVAQL (265 aa)). Positions 3170–3561 (KAVGNQVVTT…DVEKKANAGI (392 aa)) are C-terminal stalk. The outer membrane translocation of the passenger domain stretch occupies residues 3539-3574 (LDNAFRITNNRIDDVEKKANAGIAAAMALESAPYVP). 4 consecutive transmembrane segments (beta stranded) span residues 3575-3585 (GKYTYAAGAAY), 3589-3599 (ENAVGVTLRKT), 3608-3614 (TGGVAAA), and 3618-3629 (DASVRIGISGVI). A translocator domain region spans residues 3575–3630 (GKYTYAAGAAYHGGENAVGVTLRKTADNGRWSITGGVAAASQGDASVRIGISGVID).

The protein belongs to the autotransporter-2 (AT-2) (TC 1.B.40) family. As to quaternary structure, homotrimer. Interacts with TpgA.

The protein resides in the cell surface. It localises to the cell outer membrane. Responsible for autoagglutination, and for adhesion to abiotic and biotic surfaces such as polystyrene (PS), type I collagen, polypropylene (PP), polyvinylchloride (PVC), glass and stainless steel (SS). Adhesion is much stronger than that mediated by Yersinia YadA in a comparative assay. Confers autoagglutination and binding to PS, type I collagen, PP, PVC, glass and SS upon expression in Acinetobacter baylyi strain ADP1. Involved in rapid, irreversible adherence to polyurethane. Forms an unusual biofilm. An extended, surface exposed fiber binds to quartz crystals, PS and glass. It can be removed by washing in distilled water. In Acinetobacter sp. (strain Tol 5), this protein is Trimeric autotransporter adhesin AtaA.